The primary structure comprises 91 residues: Small ribosomal subunit protein bS20 (91 aa).

Over residues 1-18 (MPLHKSAEKRLRQSEKRN) the composition is skewed to basic and acidic residues. A disordered region spans residues 1–24 (MPLHKSAEKRLRQSEKRNVRNRAR).

Belongs to the bacterial ribosomal protein bS20 family.

Its function is as follows. Binds directly to 16S ribosomal RNA. The protein is Small ribosomal subunit protein bS20 of Chlorobium phaeobacteroides (strain DSM 266 / SMG 266 / 2430).